Here is a 377-residue protein sequence, read N- to C-terminus: Prostaglandin E synthase 2 (377 aa).

The Lumenal portion of the chain corresponds to 1-65 (MAAACTRTLG…LAAPVRGSGR (65 aa)). A helical membrane pass occupies residues 66-83 (VLGCAFLLGGGFGLYQTI). In terms of domain architecture, GST N-terminal spans 105-182 (LKLTLYQYKT…ALKTYISSKD (78 aa)). Residues Val153 and 166–167 (DS) each bind glutathione. The region spanning 266-377 (YIVREGKFGS…RMQKATQHVS (112 aa)) is the GST C-terminal domain.

Belongs to the GST superfamily. In terms of assembly, homodimer.

The protein resides in the golgi apparatus membrane. It carries out the reaction prostaglandin H2 = prostaglandin E2. The catalysed reaction is prostaglandin H2 = (12S)-hydroxy-(5Z,8E,10E)-heptadecatrienoate + malonaldehyde. The protein operates within lipid metabolism; prostaglandin biosynthesis. With respect to regulation, isomerase activity is increased by sulfhydril compounds. Dithiothreitol (DTT) is most effective, followed by glutathione (GSH) and 2-mercaptoethanol. Its function is as follows. Isomerase that catalyzes the conversion of PGH2 into the more stable prostaglandin E2 (PGE2) (in vitro). The biological function and the GSH-dependent property of PTGES2 is still under debate. In vivo, PTGES2 could form a complex with GSH and heme and would not participate in PGE2 synthesis but would catalyze the degradation of prostaglandin E2 H2 (PGH2) to 12(S)-hydroxy-5(Z),8(E),10(E)-heptadecatrienoic acid (HHT) and malondialdehyde (MDA). This Danio rerio (Zebrafish) protein is Prostaglandin E synthase 2 (ptges2).